Here is a 534-residue protein sequence, read N- to C-terminus: Peptide chain release factor 3 (534 aa).

A tr-type G domain is found at 9 to 278 (ARRRTFAIIS…FFVEHAPPPQ (270 aa)). Residues 18-25 (SHPDAGKT), 86-90 (DTPGH), and 140-143 (NKLD) contribute to the GTP site.

Belongs to the TRAFAC class translation factor GTPase superfamily. Classic translation factor GTPase family. PrfC subfamily.

The protein localises to the cytoplasm. In terms of biological role, increases the formation of ribosomal termination complexes and stimulates activities of RF-1 and RF-2. It binds guanine nucleotides and has strong preference for UGA stop codons. It may interact directly with the ribosome. The stimulation of RF-1 and RF-2 is significantly reduced by GTP and GDP, but not by GMP. In Xanthomonas campestris pv. campestris (strain 8004), this protein is Peptide chain release factor 3.